Reading from the N-terminus, the 513-residue chain is ATP synthase subunit alpha (513 aa).

Position 169 to 176 (169 to 176 (GDRQTGKT)) interacts with ATP.

This sequence belongs to the ATPase alpha/beta chains family. F-type ATPases have 2 components, CF(1) - the catalytic core - and CF(0) - the membrane proton channel. CF(1) has five subunits: alpha(3), beta(3), gamma(1), delta(1), epsilon(1). CF(0) has three main subunits: a(1), b(2) and c(9-12). The alpha and beta chains form an alternating ring which encloses part of the gamma chain. CF(1) is attached to CF(0) by a central stalk formed by the gamma and epsilon chains, while a peripheral stalk is formed by the delta and b chains.

The protein localises to the cell inner membrane. The catalysed reaction is ATP + H2O + 4 H(+)(in) = ADP + phosphate + 5 H(+)(out). Produces ATP from ADP in the presence of a proton gradient across the membrane. The alpha chain is a regulatory subunit. This Ralstonia nicotianae (strain ATCC BAA-1114 / GMI1000) (Ralstonia solanacearum) protein is ATP synthase subunit alpha.